The following is a 439-amino-acid chain: tRNA-2-methylthio-N(6)-dimethylallyladenosine synthase (439 aa).

In terms of domain architecture, MTTase N-terminal spans 2 to 115; it reads KGLYIKTYGC…LPELIVKASR (114 aa). [4Fe-4S] cluster is bound by residues Cys11, Cys47, Cys78, Cys155, Cys159, and Cys162. A Radical SAM core domain is found at 141 to 372; sequence NSQGSSAFLA…QKLISKQQLE (232 aa). The region spanning 375 to 439 is the TRAM domain; the sequence is QSMVGKTIPV…QSSLLGCAFH (65 aa).

Belongs to the methylthiotransferase family. MiaB subfamily. Monomer. Requires [4Fe-4S] cluster as cofactor.

The protein localises to the cytoplasm. It catalyses the reaction N(6)-dimethylallyladenosine(37) in tRNA + (sulfur carrier)-SH + AH2 + 2 S-adenosyl-L-methionine = 2-methylsulfanyl-N(6)-dimethylallyladenosine(37) in tRNA + (sulfur carrier)-H + 5'-deoxyadenosine + L-methionine + A + S-adenosyl-L-homocysteine + 2 H(+). Functionally, catalyzes the methylthiolation of N6-(dimethylallyl)adenosine (i(6)A), leading to the formation of 2-methylthio-N6-(dimethylallyl)adenosine (ms(2)i(6)A) at position 37 in tRNAs that read codons beginning with uridine. This Wolbachia pipientis wMel protein is tRNA-2-methylthio-N(6)-dimethylallyladenosine synthase.